A 294-amino-acid chain; its full sequence is Lipoyl synthase (294 aa).

7 residues coordinate [4Fe-4S] cluster: Cys35, Cys40, Cys46, Cys61, Cys65, Cys68, and Ser273. One can recognise a Radical SAM core domain in the interval 47–262 (FRQRQATFLI…REQALSMGFE (216 aa)).

It belongs to the radical SAM superfamily. Lipoyl synthase family. [4Fe-4S] cluster serves as cofactor.

It localises to the cytoplasm. The enzyme catalyses [[Fe-S] cluster scaffold protein carrying a second [4Fe-4S](2+) cluster] + N(6)-octanoyl-L-lysyl-[protein] + 2 oxidized [2Fe-2S]-[ferredoxin] + 2 S-adenosyl-L-methionine + 4 H(+) = [[Fe-S] cluster scaffold protein] + N(6)-[(R)-dihydrolipoyl]-L-lysyl-[protein] + 4 Fe(3+) + 2 hydrogen sulfide + 2 5'-deoxyadenosine + 2 L-methionine + 2 reduced [2Fe-2S]-[ferredoxin]. It participates in protein modification; protein lipoylation via endogenous pathway; protein N(6)-(lipoyl)lysine from octanoyl-[acyl-carrier-protein]: step 2/2. Functionally, catalyzes the radical-mediated insertion of two sulfur atoms into the C-6 and C-8 positions of the octanoyl moiety bound to the lipoyl domains of lipoate-dependent enzymes, thereby converting the octanoylated domains into lipoylated derivatives. The polypeptide is Lipoyl synthase (Geotalea daltonii (strain DSM 22248 / JCM 15807 / FRC-32) (Geobacter daltonii)).